Here is a 225-residue protein sequence, read N- to C-terminus: Ribose-5-phosphate isomerase A (225 aa).

Residues 33-36 (TGST), 84-87 (DGAD), and 96-99 (KGGG) each bind substrate. Glu105 (proton acceptor) is an active-site residue. Substrate is bound at residue Lys123.

This sequence belongs to the ribose 5-phosphate isomerase family. In terms of assembly, homodimer.

The catalysed reaction is aldehydo-D-ribose 5-phosphate = D-ribulose 5-phosphate. It participates in carbohydrate degradation; pentose phosphate pathway; D-ribose 5-phosphate from D-ribulose 5-phosphate (non-oxidative stage): step 1/1. Catalyzes the reversible conversion of ribose-5-phosphate to ribulose 5-phosphate. The protein is Ribose-5-phosphate isomerase A of Halobacterium salinarum (strain ATCC 29341 / DSM 671 / R1).